The chain runs to 31 residues: uncharacterized protein (31 aa).

The segment at 1 to 31 (MKKLERMSEVSQMCSEAKKNRKRMSVVSSVA) is disordered.

This is an uncharacterized protein from Sulfolobus islandicus filamentous virus (isolate Iceland/Hveragerdi) (SIFV).